The sequence spans 134 residues: DNA-binding protein inhibitor ID-2 (134 aa).

Residues Ser14 and Ser25 each carry the phosphoserine modification. The region spanning 23-75 is the bHLH domain; sequence SRSKTPVDDPMSLLYNMNDCYSKLKELVPSIPQNKKVSKMEILQHVIDYILDL. The Nuclear export signal motif lies at 106 to 115; sequence LNTDISILSL.

As to quaternary structure, interacts with GATA4 and NKX2-5. Interacts with NR0B2. Interacts with CLOCK and BMAL1. Interacts with IFI204. Interacts with NEDD9/HEF1. Interacts with ASB4; this interaction promotes ID2 proteasomal degradation. Ubiquitinated in a ASB4-depedent manner, leading to proteasomal degradation. Post-translationally, phosphorylated in vitro by CDK1, PKA and PKC. In terms of tissue distribution, highly expressed in early fetal tissues, including those of the central nervous system.

It localises to the cytoplasm. The protein resides in the nucleus. Transcriptional regulator (lacking a basic DNA binding domain) which negatively regulates the basic helix-loop-helix (bHLH) transcription factors by forming heterodimers and inhibiting their DNA binding and transcriptional activity. Implicated in regulating a variety of cellular processes, including cellular growth, senescence, differentiation, apoptosis, angiogenesis, and neoplastic transformation. Inhibits skeletal muscle and cardiac myocyte differentiation. Regulates the circadian clock by repressing the transcriptional activator activity of the CLOCK-BMAL1 heterodimer. Restricts the CLOCK and BMAL1 localization to the cytoplasm. Plays a role in both the input and output pathways of the circadian clock: in the input component, is involved in modulating the magnitude of photic entrainment and in the output component, contributes to the regulation of a variety of liver clock-controlled genes involved in lipid metabolism. The sequence is that of DNA-binding protein inhibitor ID-2 (ID2) from Homo sapiens (Human).